A 151-amino-acid polypeptide reads, in one-letter code: Putative pre-16S rRNA nuclease (151 aa).

The protein belongs to the YqgF nuclease family.

It is found in the cytoplasm. Functionally, could be a nuclease involved in processing of the 5'-end of pre-16S rRNA. The polypeptide is Putative pre-16S rRNA nuclease (Onion yellows phytoplasma (strain OY-M)).